Reading from the N-terminus, the 117-residue chain is Ribonuclease P protein component (117 aa).

The protein belongs to the RnpA family. In terms of assembly, consists of a catalytic RNA component (M1 or rnpB) and a protein subunit.

The catalysed reaction is Endonucleolytic cleavage of RNA, removing 5'-extranucleotides from tRNA precursor.. In terms of biological role, RNaseP catalyzes the removal of the 5'-leader sequence from pre-tRNA to produce the mature 5'-terminus. It can also cleave other RNA substrates such as 4.5S RNA. The protein component plays an auxiliary but essential role in vivo by binding to the 5'-leader sequence and broadening the substrate specificity of the ribozyme. This Staphylococcus aureus (strain bovine RF122 / ET3-1) protein is Ribonuclease P protein component.